The sequence spans 540 residues: MGQSHSKGNSGPGDSLQSYPSFSRSDTKESLRSLRGSIRSKIRSSDSPRGSTAGLSDDKSDAASVKSTTSRRSSTNQSVQSPDDTPSQPDAPEPPPSPSLSSSLKRGHKDVNAMQQSGEVDHVSDVPPTGAAPTGPSTQKVGESILIKRENQLNPILDFIMNAPLETSGSPGMGMGALKSIDLDDMISRLLDAGYSTKVTKTVCLKNAEIMAICSAARELFLSQPALLELSAPVKIVGDVHGQYTDLIRLFEMCGFPPASNYLFLGDYVDRGKQSLETILLLLCYKLKYPENFFLLRGNHECANVTRVYGFYDECKRRCNIKIWKTFIDTFNCLPIAATVAGKIFCVHGGLSPSLSHMDDIRGIARPTDVPDYGLLNDLLWSDPADMEEDWEPNERGVSYCFGKKVIMNFLQRHDFDLVCRAHMVVEDGYEFYQDRILVTVFSAPNYCGEFDNWGAIMSVSGELLCSFELLKPLDSTALKNHIKKGRKERNSMLSSPVSPPLLRFVVAKEDHNLFVQHRRDACGLFLAYPSLVTSWGISR.

Disordered regions lie at residues 1–108 (MGQS…KRGH) and 120–140 (VDHVSDVPPTGAAPTGPSTQK). Composition is skewed to polar residues over residues 15–24 (SLQSYPSFSR) and 45–54 (SDSPRGSTAG). The segment covering 62–88 (AASVKSTTSRRSSTNQSVQSPDDTPSQ) has biased composition (low complexity). Residues 89 to 98 (PDAPEPPPSP) are compositionally biased toward pro residues. Positions 127-136 (PPTGAAPTGP) are enriched in low complexity. Aspartate 239, histidine 241, aspartate 267, and asparagine 299 together coordinate Mn(2+). The 283-residue stretch at 258 to 540 (PASNYLFLGD…SLVTSWGISR (283 aa)) folds into the Phosphatase tensin-type domain. The active-site Proton donor is histidine 300. The Mn(2+) site is built by histidine 348 and histidine 423.

The protein belongs to the PPP phosphatase family. PP-Z subfamily. Interacts with at least 54 proteins, of which 31 are detected only after iron starvation and 22 are detected only in control conditions. Only the regulatory subunit of the protein phosphatase PP1 (Afu1g04800/AFUB_005140) interacts with ppzA in both conditions. Mn(2+) is required as a cofactor.

Its subcellular location is the cytoplasm. The enzyme catalyses O-phospho-L-seryl-[protein] + H2O = L-seryl-[protein] + phosphate. The catalysed reaction is O-phospho-L-threonyl-[protein] + H2O = L-threonyl-[protein] + phosphate. Catalytic subunit of protein phosphatase Z (PPZ) involved in iron assimilation. Regulates secondary metabolites production, including gliotoxin, pyripyropene A, fumagillin, fumiquinazoline A, triacetyl-fusarinine C, and helvolic acid. Plays a key role in pathogenicity. The chain is Serine/threonine-protein phosphatase ppzA from Aspergillus fumigatus (strain CBS 144.89 / FGSC A1163 / CEA10) (Neosartorya fumigata).